The sequence spans 534 residues: O-phosphoserine--tRNA(Cys) ligase (534 aa).

Residues 186–188, 231–233, 273–274, and asparagine 325 each bind substrate; these read HMT, SAS, and YY.

The protein belongs to the class-II aminoacyl-tRNA synthetase family. O-phosphoseryl-tRNA(Cys) synthetase subfamily. Homotetramer. Interacts with SepCysS.

It catalyses the reaction tRNA(Cys) + O-phospho-L-serine + ATP = O-phospho-L-seryl-tRNA(Cys) + AMP + diphosphate. Its function is as follows. Catalyzes the attachment of O-phosphoserine (Sep) to tRNA(Cys). The chain is O-phosphoserine--tRNA(Cys) ligase (sepS) from Archaeoglobus fulgidus (strain ATCC 49558 / DSM 4304 / JCM 9628 / NBRC 100126 / VC-16).